Reading from the N-terminus, the 440-residue chain is MSENNEFQSVTESTTAPTTSNPYGPNPADYLSNVKNFQLIDSTLREGEQFANAFFDTEKKIEIARALDDFGVDYIELTSPVASEQSRKDCEAICKLGLKAKILTHIRCHMDDARVAVETGVDGVDVVIGTSKFLRQYSHGKDMNYIAKSAVEVIEFVKSKGIEIRFSSEDSFRSDLVDLLNIYKTVDKIGVNRVGIADTVGCANPRQVYELIRTLKSVVSCDIECHFHNDTGCAIANAYTALEGGARLIDVSVLGIGERNGITPLGGLMARMIVAAPDYVRSKYKLHKIRDIENLVADAVEVNIPFNNPITGFCAFTHKAGIHAKAILANPSTYEILDPHDFGMKRYIHFANRLTGWNAIKSRVDQLNLNLTDDQIKEVTAKIKKLGDVRPLNIDDVDSIIKDFHAELSTPLLKPVNKGTDDDNIDISNGHVSKKAKVTK.

Residues 1–23 (MSENNEFQSVTESTTAPTTSNPY) are compositionally biased toward polar residues. The disordered stretch occupies residues 1-27 (MSENNEFQSVTESTTAPTTSNPYGPNP). One can recognise a Pyruvate carboxyltransferase domain in the interval 37-290 (FQLIDSTLRE…RSKYKLHKIR (254 aa)). Arg-45 provides a ligand contact to 2-oxoglutarate. Glu-46 contacts Mg(2+). Positions 105, 165, and 199 each coordinate 2-oxoglutarate. Mg(2+)-binding residues include His-226 and His-228. His-323 serves as the catalytic Proton acceptor. Residue Ser-399 is modified to Phosphoserine. Thr-410 bears the Phosphothreonine mark.

The protein belongs to the alpha-IPM synthase/homocitrate synthase family. Homocitrate synthase LYS20/LYS21 subfamily. Mg(2+) is required as a cofactor. It depends on Mn(2+) as a cofactor.

The protein resides in the mitochondrion. The catalysed reaction is acetyl-CoA + 2-oxoglutarate + H2O = (2R)-homocitrate + CoA + H(+). It functions in the pathway amino-acid biosynthesis; L-lysine biosynthesis via AAA pathway; L-alpha-aminoadipate from 2-oxoglutarate: step 1/5. Its function is as follows. Catalyzes the aldol-type condensation of 2-oxoglutarate with acetyl-CoA to yield homocitrate. Carries out the first step of the alpha-aminoadipate (AAA) lysine biosynthesis pathway. The polypeptide is Homocitrate synthase, mitochondrial (LYS21) (Saccharomyces cerevisiae (strain ATCC 204508 / S288c) (Baker's yeast)).